Consider the following 77-residue polypeptide: Acyl carrier protein (77 aa).

A Carrier domain is found at 1–76 (MENFDKVKDI…DAVKYINSLE (76 aa)). The residue at position 36 (Ser-36) is an O-(pantetheine 4'-phosphoryl)serine.

Belongs to the acyl carrier protein (ACP) family. Post-translationally, 4'-phosphopantetheine is transferred from CoA to a specific serine of apo-ACP by AcpS. This modification is essential for activity because fatty acids are bound in thioester linkage to the sulfhydryl of the prosthetic group.

The protein resides in the cytoplasm. It functions in the pathway lipid metabolism; fatty acid biosynthesis. Carrier of the growing fatty acid chain in fatty acid biosynthesis. In Staphylococcus epidermidis (strain ATCC 12228 / FDA PCI 1200), this protein is Acyl carrier protein.